A 140-amino-acid chain; its full sequence is uncharacterized protein (140 aa).

Helical transmembrane passes span 33–53 (LLYVFLFIIFANCVVDVKYYF) and 59–79 (SLLFVYFFLTLIILLVSFMGF). Residues 89–104 (EAEPDYRKKQESKNQD) show a composition bias toward basic and acidic residues. Positions 89 to 140 (EAEPDYRKKQESKNQDFLKSQSNEPLEYASSSAVELEKEKNTREGLTILESS) are disordered. The segment covering 105–121 (FLKSQSNEPLEYASSSA) has biased composition (polar residues).

Its subcellular location is the membrane. This is an uncharacterized protein from Schizosaccharomyces pombe (strain 972 / ATCC 24843) (Fission yeast).